The following is a 208-amino-acid chain: EF-hand protein 5 variant 1 (208 aa).

Residues 1-34 (MQARGTVKVQGDAKVDGKMSTGQHSHHQHLNSTQ) form a disordered region. EF-hand domains are found at residues 64–98 (MAEG…HLTE), 99–134 (EEFH…EVDD), 135–170 (TMAD…LGER), and 171–206 (STPE…SRVN). 5 residues coordinate Ca(2+): Glu-118, Asp-123, Asp-148, Thr-152, and Tyr-154.

The sequence is that of EF-hand protein 5 variant 1 from Trypanosoma cruzi.